A 355-amino-acid polypeptide reads, in one-letter code: Protein RecA (355 aa).

Residue 67 to 74 participates in ATP binding; it reads GPESSGKT. The disordered stretch occupies residues 331–355; it reads NQDDKPDFTPAAHEVDEGSEAKENF.

This sequence belongs to the RecA family.

Its subcellular location is the cytoplasm. In terms of biological role, can catalyze the hydrolysis of ATP in the presence of single-stranded DNA, the ATP-dependent uptake of single-stranded DNA by duplex DNA, and the ATP-dependent hybridization of homologous single-stranded DNAs. It interacts with LexA causing its activation and leading to its autocatalytic cleavage. The chain is Protein RecA from Erwinia tasmaniensis (strain DSM 17950 / CFBP 7177 / CIP 109463 / NCPPB 4357 / Et1/99).